Reading from the N-terminus, the 776-residue chain is 3-isopropylmalate dehydratase (776 aa).

The [4Fe-4S] cluster site is built by cysteine 357, cysteine 418, and cysteine 421. A compositionally biased stretch (basic and acidic residues) spans 482 to 493 (SAPKVEVRHDTD). 2 disordered regions span residues 482–518 (SAPKVEVRHDTDSSTLEEANYGHAKEEPPSAELSDVA) and 525–544 (DIPVSNSSTQSPGSAPSADA). Positions 527–538 (PVSNSSTQSPGS) are enriched in polar residues.

It belongs to the aconitase/IPM isomerase family. As to quaternary structure, monomer. [4Fe-4S] cluster is required as a cofactor.

It carries out the reaction (2R,3S)-3-isopropylmalate = (2S)-2-isopropylmalate. Its pathway is amino-acid biosynthesis; L-leucine biosynthesis; L-leucine from 3-methyl-2-oxobutanoate: step 2/4. Catalyzes the isomerization between 2-isopropylmalate and 3-isopropylmalate, via the formation of 2-isopropylmaleate. The protein is 3-isopropylmalate dehydratase (LEU1) of Eremothecium gossypii (strain ATCC 10895 / CBS 109.51 / FGSC 9923 / NRRL Y-1056) (Yeast).